The following is a 328-amino-acid chain: Protoheme IX farnesyltransferase (328 aa).

8 consecutive transmembrane segments (helical) span residues 31 to 51 (IILL…KGEV), 53 to 73 (LFLL…ANAI), 120 to 140 (VFAN…YVGV), 153 to 173 (IVIG…AVTG), 181 to 201 (LLFA…AIYI), 226 to 246 (IWVY…PLHV), 250 to 270 (IYAV…WQLL), and 285 to 305 (YSIY…LPFT).

Belongs to the UbiA prenyltransferase family. Protoheme IX farnesyltransferase subfamily.

It is found in the cell inner membrane. The catalysed reaction is heme b + (2E,6E)-farnesyl diphosphate + H2O = Fe(II)-heme o + diphosphate. Its pathway is porphyrin-containing compound metabolism; heme O biosynthesis; heme O from protoheme: step 1/1. Functionally, converts heme B (protoheme IX) to heme O by substitution of the vinyl group on carbon 2 of heme B porphyrin ring with a hydroxyethyl farnesyl side group. The sequence is that of Protoheme IX farnesyltransferase from Trichodesmium erythraeum (strain IMS101).